A 70-amino-acid chain; its full sequence is Conotoxin AbVIC (70 aa).

Residues 1–17 form the signal peptide; the sequence is VLIIAVLFLTACQLTTA. A propeptide spanning residues 18–41 is cleaved from the precursor; sequence ETSSRGKQKHRALRSTDKNSKLTR. The tract at residues 19-41 is disordered; sequence TSSRGKQKHRALRSTDKNSKLTR. Intrachain disulfides connect C43-C57, C50-C61, and C56-C68.

It belongs to the conotoxin O1 superfamily. Expressed by the venom duct.

Its subcellular location is the secreted. The protein is Conotoxin AbVIC of Conus abbreviatus (Abbreviated cone).